The chain runs to 906 residues: Eukaryotic translation initiation factor 4 gamma 2 (906 aa).

M1 bears the N-acetylmethionine mark. Residues 1–71 (MESAIAEGGA…SAANNSANEK (71 aa)) are disordered. S11 carries the phosphoserine modification. In terms of domain architecture, MIF4G spans 78–308 (FRKVRGILNK…QDTVELREHH (231 aa)). T89 is subject to Phosphothreonine. The residue at position 359 (R359) is an Omega-N-methylarginine. S394 carries the phosphoserine modification. The residue at position 430 (K430) is an N6-methyllysine. Residue S442 is modified to Phosphoserine. Positions 497-540 (PPSAQPPRTQTPPLGQTPQLGLKTNPPLIQEKPAKTSKKPPPSK) are disordered. The span at 502–515 (PPRTQTPPLGQTPQ) shows a compositional bias: polar residues. R504 carries the omega-N-methylarginine modification. T507 and T513 each carry phosphothreonine. In terms of domain architecture, MI spans 542–665 (ELLKLTEAVV…SISELAQPLE (124 aa)). K574 is covalently cross-linked (Glycyl lysine isopeptide (Lys-Gly) (interchain with G-Cter in SUMO2)). The region spanning 719–903 (EGKGLSFLFP…ETAEEEESEE (185 aa)) is the W2 domain. The residue at position 901 (S901) is a Phosphoserine.

The protein belongs to the eukaryotic initiation factor 4G family. In terms of assembly, interacts with the serine/threonine protein kinases MKNK1 and MKNK2. Binds EIF4A and EIF3. Interacts with MIF4GD. Interacts with DAZAP2. Phosphorylation; hyperphosphorylated during mitosis. Ubiquitously expressed in all tissues examined.

In terms of biological role, appears to play a role in the switch from cap-dependent to IRES-mediated translation during mitosis, apoptosis and viral infection. Cleaved by some caspases and viral proteases. The sequence is that of Eukaryotic translation initiation factor 4 gamma 2 from Mus musculus (Mouse).